The sequence spans 247 residues: MKIDVIISADYIDSESLKGKIAVVIDMLRATSVITTALYNGAKKVIPVVSVEEAFEKANELKSLGEEVLLGGERKALKIDGFDFSNSPLEYKREIVEGKNVIMSTTNGTRALNLCNKADKVIVASVLNGQAVAKYLENEEKEIVFVNSGTNGEFSSDDFMCAGYIISEICKNKEAELTDIAKTAKYVCESSEGIEEFIKDAKHYNILKNLGLEEDLKYCSTKNLIDLVFEFKNGEIKTVESGVKVTI.

This sequence belongs to the ComB family. It depends on Mg(2+) as a cofactor.

The enzyme catalyses (2R)-O-phospho-3-sulfolactate + H2O = (2R)-3-sulfolactate + phosphate. This Clostridium perfringens (strain 13 / Type A) protein is Probable 2-phosphosulfolactate phosphatase.